We begin with the raw amino-acid sequence, 255 residues long: MAELRALVAVKRVIDYAVKIRVKPDRTGVVTDGVKHSMNPFCEIAVEEAVRLKEKKLVKEVIAVSCGPAQCQETIRTALAMGADRGIHVEVPPAEAERLGPLQVARVLAKLAEKEKVDLVLLGKQAIDDDCNQTGQMTAGFLDWPQGTFASQVTLEGDKLKVEREIDGGLETLRLKLPAVVTADLRLNEPRYATLPNIMKAKKKKIEVIKPGDLGVDLTSKLSVISVEDPPQRTAGVKVETTEDLVAKLKEIGRI.

Ala-2 is subject to N-acetylalanine. AMP-binding positions include Ala-9, 39-42, Cys-66, and 123-134; these read NPFC and GKQAIDDDCNQT. A recognition loop region spans residues 183 to 205; the sequence is ADLRLNEPRYATLPNIMKAKKKK. At Lys-200 the chain carries N6,N6,N6-trimethyllysine; by ETFBKMT; alternate. At Lys-200 the chain carries N6-acetyllysine; alternate. Lys-200 bears the N6-methyllysine; alternate mark. The residue at position 203 (Lys-203) is an N6,N6,N6-trimethyllysine; by ETFBKMT. An N6-acetyllysine; alternate modification is found at Lys-210. Lys-210 is subject to N6-succinyllysine; alternate. Ser-223 and Ser-226 each carry phosphoserine. Lys-238 bears the N6-acetyllysine mark. At Lys-248 the chain carries N6-acetyllysine; alternate. Lys-248 bears the N6-succinyllysine; alternate mark.

It belongs to the ETF beta-subunit/FixA family. As to quaternary structure, heterodimer composed of ETFA and ETFB. Identified in a complex that contains ETFA, ETFB and ETFRF1. Interacts with ACADM. Methylated. Trimethylation at Lys-200 and Lys-203 may negatively regulate the activity in electron transfer from acyl-CoA dehydrogenases.

The protein resides in the mitochondrion matrix. In terms of biological role, heterodimeric electron transfer flavoprotein that accepts electrons from several mitochondrial dehydrogenases, including acyl-CoA dehydrogenases, glutaryl-CoA and sarcosine dehydrogenase. It transfers the electrons to the main mitochondrial respiratory chain via ETF-ubiquinone oxidoreductase. Required for normal mitochondrial fatty acid oxidation and normal amino acid metabolism. ETFB binds an AMP molecule that probably has a purely structural role. This is Electron transfer flavoprotein subunit beta from Pongo abelii (Sumatran orangutan).